The following is a 402-amino-acid chain: Choline dehydrogenase (402 aa).

This sequence belongs to the iron-containing alcohol dehydrogenase family.

It carries out the reaction choline + NAD(+) = betaine aldehyde + NADH + H(+). The protein operates within amine and polyamine biosynthesis; betaine biosynthesis via choline pathway; betaine aldehyde from choline (dehydrogenase route): step 1/1. Involved in the biosynthesis of the osmoprotectant glycine betaine from choline. The polypeptide is Choline dehydrogenase (Bacillus subtilis (strain 168)).